The sequence spans 122 residues: Large ribosomal subunit protein bL12 (122 aa).

Belongs to the bacterial ribosomal protein bL12 family. Homodimer. Part of the ribosomal stalk of the 50S ribosomal subunit. Forms a multimeric L10(L12)X complex, where L10 forms an elongated spine to which 2 to 4 L12 dimers bind in a sequential fashion. Binds GTP-bound translation factors.

In terms of biological role, forms part of the ribosomal stalk which helps the ribosome interact with GTP-bound translation factors. Is thus essential for accurate translation. This Azotobacter vinelandii (strain DJ / ATCC BAA-1303) protein is Large ribosomal subunit protein bL12.